The sequence spans 548 residues: Probable malate:quinone oxidoreductase (548 aa).

Belongs to the MQO family. Requires FAD as cofactor.

The enzyme catalyses (S)-malate + a quinone = a quinol + oxaloacetate. The protein operates within carbohydrate metabolism; tricarboxylic acid cycle; oxaloacetate from (S)-malate (quinone route): step 1/1. This is Probable malate:quinone oxidoreductase from Escherichia coli (strain SE11).